A 326-amino-acid chain; its full sequence is tRNA N6-adenosine threonylcarbamoyltransferase (326 aa).

Positions 111 and 115 each coordinate Fe cation. Substrate contacts are provided by residues 134–138, aspartate 167, glycine 180, aspartate 184, and asparagine 268; that span reads TVSGG. Aspartate 293 is a Fe cation binding site.

It belongs to the KAE1 / TsaD family. Fe(2+) serves as cofactor.

It is found in the cytoplasm. The enzyme catalyses L-threonylcarbamoyladenylate + adenosine(37) in tRNA = N(6)-L-threonylcarbamoyladenosine(37) in tRNA + AMP + H(+). In terms of biological role, required for the formation of a threonylcarbamoyl group on adenosine at position 37 (t(6)A37) in tRNAs that read codons beginning with adenine. Is involved in the transfer of the threonylcarbamoyl moiety of threonylcarbamoyl-AMP (TC-AMP) to the N6 group of A37, together with TsaE and TsaB. TsaD likely plays a direct catalytic role in this reaction. The polypeptide is tRNA N6-adenosine threonylcarbamoyltransferase (Dehalococcoides mccartyi (strain ATCC BAA-2100 / JCM 16839 / KCTC 5957 / BAV1)).